The sequence spans 123 residues: uncharacterized protein (123 aa).

The protein to M.tuberculosis Rv0477.

This is an uncharacterized protein from Mycobacterium leprae (strain TN).